Consider the following 1036-residue polypeptide: Cellulose synthase-like protein D1 (1036 aa).

The tract at residues 1–99 is disordered; it reads MASSPPKKTL…GGGDGPKMGN (99 aa). Polar residues-rich tracts occupy residues 9-19 and 69-80; these read TLNSQSSSLSR and NQPAGSSGSTSE. Residues 86 to 95 are compositionally biased toward gly residues; sequence NRGGGGGDGP. Helical transmembrane passes span 178 to 198 and 208 to 228; these read ILSPYRLLIVIRLVIVFFFLW and AMWLWGLSIVCEIWFAFSWIL. Asp-308 is an active-site residue. The interval 626–665 is disordered; it reads AMHVRTQSQASQTSQASDLESDTQPLNDDPDLGLPKKFGN. Over residues 631 to 642 the composition is skewed to low complexity; it reads TQSQASQTSQAS. Asp-741 is an active-site residue. 6 helical membrane passes run 817–837, 848–868, 895–915, 938–958, 962–982, and 1002–1022; these read IYPFTSIFLVVYCFLPALCLF, IHFLSYLLCITVTLTLISLLE, LAAVVQGLLKVIAGIEISFTL, GLFIMPLTIIIVNLVAIVIGA, IYSVIPQWGKLMGGIFFSLWV, and TIVYVWSGLVSITVSLLWITI.

Belongs to the glycosyltransferase 2 family. Plant cellulose synthase-like D subfamily.

The protein localises to the golgi apparatus membrane. Functionally, thought to be a Golgi-localized beta-glycan synthase that polymerize the backbones of noncellulosic polysaccharides (hemicelluloses) of plant cell wall. In Arabidopsis thaliana (Mouse-ear cress), this protein is Cellulose synthase-like protein D1 (CSLD1).